The sequence spans 464 residues: Interstitial collagenase A (464 aa).

Positions 1–17 (MPSLPLLLLLWAASSYS) are cleaved as a signal peptide. Positions 18–96 (FPVFHNGDRQ…PRCGVPDVAP (79 aa)) are cleaved as a propeptide — activation peptide. A Cysteine switch motif is present at residues 87–94 (PRCGVPDV). Cys-89 contributes to the Zn(2+) binding site. The interval 95 to 274 (APYAITHNNP…IQPTGATTPH (180 aa)) is metalloprotease. A Ca(2+)-binding site is contributed by Asp-155. 2 residues coordinate Zn(2+): His-165 and Asp-167. The Ca(2+) site is built by Asp-172 and Gly-173. His-180 contacts Zn(2+). Residues Gly-187, Gly-189, and Asp-191 each coordinate Ca(2+). His-193 is a Zn(2+) binding site. 2 residues coordinate Ca(2+): Asp-195 and Glu-198. The N-linked (GlcNAc...) asparagine glycan is linked to Asn-202. His-215 provides a ligand contact to Zn(2+). Residue Glu-216 is part of the active site. Zn(2+) is bound by residues His-219 and His-225. 2 Hemopexin repeats span residues 273-322 (PHPC…WPNL) and 323-369 (PVKL…FGFP). Cys-276 and Cys-464 are oxidised to a cystine. Residue Asp-283 coordinates Ca(2+). Asn-371 carries an N-linked (GlcNAc...) asparagine glycan. 2 Hemopexin repeats span residues 372–420 (VTHI…FPGI) and 421–464 (DDKV…WFNC). Positions 376 and 425 each coordinate Ca(2+).

The protein belongs to the peptidase M10A family. Ca(2+) is required as a cofactor. It depends on Zn(2+) as a cofactor.

It localises to the secreted. The protein localises to the extracellular space. Its subcellular location is the extracellular matrix. The catalysed reaction is Cleavage of the triple helix of collagen at about three-quarters of the length of the molecule from the N-terminus, at 775-Gly-|-Ile-776 in the alpha1(I) chain. Cleaves synthetic substrates and alpha-macroglobulins at bonds where P1' is a hydrophobic residue.. Its activity is regulated as follows. Can be activated without removal of the activation peptide. In terms of biological role, cleaves collagens of types I, II, and III at one site in the helical domain. Also cleaves collagens of types VII and X. Able to degrade synthetic peptides and type I and II fibrillar collagen. In Mus musculus (Mouse), this protein is Interstitial collagenase A (Mmp1a).